The following is a 125-amino-acid chain: Large ribosomal subunit protein bL20 (125 aa).

This sequence belongs to the bacterial ribosomal protein bL20 family.

Binds directly to 23S ribosomal RNA and is necessary for the in vitro assembly process of the 50S ribosomal subunit. It is not involved in the protein synthesizing functions of that subunit. The chain is Large ribosomal subunit protein bL20 from Rhizorhabdus wittichii (strain DSM 6014 / CCUG 31198 / JCM 15750 / NBRC 105917 / EY 4224 / RW1) (Sphingomonas wittichii).